The sequence spans 113 residues: Putative membrane protein insertion efficiency factor (113 aa).

This sequence belongs to the UPF0161 family.

It is found in the cell inner membrane. Could be involved in insertion of integral membrane proteins into the membrane. The chain is Putative membrane protein insertion efficiency factor from Campylobacter concisus (strain 13826).